Reading from the N-terminus, the 357-residue chain is Peptide chain release factor 1 (357 aa).

Position 233 is an N5-methylglutamine (Q233).

This sequence belongs to the prokaryotic/mitochondrial release factor family. Post-translationally, methylated by PrmC. Methylation increases the termination efficiency of RF1.

The protein localises to the cytoplasm. Its function is as follows. Peptide chain release factor 1 directs the termination of translation in response to the peptide chain termination codons UAG and UAA. The protein is Peptide chain release factor 1 of Leuconostoc citreum (strain KM20).